A 216-amino-acid chain; its full sequence is Transmembrane protein 125 (216 aa).

The next 4 membrane-spanning stretches (helical) occupy residues 32 to 52 (LLCF…GVAL), 65 to 85 (LAVG…QLMS), 111 to 131 (AVVV…LAGL), and 144 to 164 (MLSV…GLLL).

It localises to the membrane. This Mus musculus (Mouse) protein is Transmembrane protein 125 (Tmem125).